A 214-amino-acid chain; its full sequence is Pyridoxine/pyridoxamine 5'-phosphate oxidase (214 aa).

Substrate-binding positions include Arg-9–Tyr-12 and Lys-67. Residues Arg-62 to Lys-67, Phe-77 to Thr-78, Lys-84, and Gln-106 each bind FMN. Residues Tyr-124, Arg-128, and Ser-132 each coordinate substrate. FMN contacts are provided by residues Gln-141–Ser-142 and Trp-186. Arg-192 to His-194 lines the substrate pocket. Arg-196 provides a ligand contact to FMN.

The protein belongs to the pyridoxamine 5'-phosphate oxidase family. Homodimer. It depends on FMN as a cofactor.

It catalyses the reaction pyridoxamine 5'-phosphate + O2 + H2O = pyridoxal 5'-phosphate + H2O2 + NH4(+). It carries out the reaction pyridoxine 5'-phosphate + O2 = pyridoxal 5'-phosphate + H2O2. Its pathway is cofactor metabolism; pyridoxal 5'-phosphate salvage; pyridoxal 5'-phosphate from pyridoxamine 5'-phosphate: step 1/1. It functions in the pathway cofactor metabolism; pyridoxal 5'-phosphate salvage; pyridoxal 5'-phosphate from pyridoxine 5'-phosphate: step 1/1. In terms of biological role, catalyzes the oxidation of either pyridoxine 5'-phosphate (PNP) or pyridoxamine 5'-phosphate (PMP) into pyridoxal 5'-phosphate (PLP). The sequence is that of Pyridoxine/pyridoxamine 5'-phosphate oxidase from Microcystis aeruginosa (strain NIES-843 / IAM M-2473).